We begin with the raw amino-acid sequence, 586 residues long: Arginine--tRNA ligase (586 aa).

The 'HIGH' region motif lies at 133–143 (ANPTGPLNIVS).

Belongs to the class-I aminoacyl-tRNA synthetase family. In terms of assembly, monomer.

The protein resides in the cytoplasm. The catalysed reaction is tRNA(Arg) + L-arginine + ATP = L-arginyl-tRNA(Arg) + AMP + diphosphate. This Leptospira borgpetersenii serovar Hardjo-bovis (strain JB197) protein is Arginine--tRNA ligase.